The sequence spans 234 residues: HTH-type transcriptional regulator MT1864 (234 aa).

The region spanning 15–75 is the HTH tetR-type domain; it reads EQIEAKIVEL…LLLVDAYSDL (61 aa). A DNA-binding region (H-T-H motif) is located at residues 38 to 57; it reads SLRAIARNLGMVSSAVYRYV.

Homodimer.

It localises to the cytoplasm. Functionally, may participate in the regulatory network that controls the expression of MmpL lipid transporters. The protein is HTH-type transcriptional regulator MT1864 of Mycobacterium tuberculosis (strain CDC 1551 / Oshkosh).